The chain runs to 238 residues: 15,16-dihydrobiliverdin:ferredoxin oxidoreductase (238 aa).

This sequence belongs to the HY2 family.

It catalyses the reaction 15,16-dihydrobiliverdin + oxidized 2[4Fe-4S]-[ferredoxin] = biliverdin IXalpha + reduced 2[4Fe-4S]-[ferredoxin] + 2 H(+). Catalyzes the two-electron reduction of biliverdin IX-alpha at the C15 methine bridge. This chain is 15,16-dihydrobiliverdin:ferredoxin oxidoreductase, found in Prochlorococcus marinus (strain MIT 9211).